Reading from the N-terminus, the 381-residue chain is MPAVNLGMPKVPEVLAPRRKTRQISVGKVKVGGNAQVSVQSMTTTQTTNINATLQQIAELTATGCDIVRVAVPHQDDADVLHILAKKSQIPIIADIHFQPRYVFTAIDAGVGAVRVNPGNIRKFDDQVGAIAKAAKAAGTSIRIGVNAGSLHPSLLQKYGKATPEALVESAVWEASLFEEHDFHDFKISVKHNDPVIMVKAYRLLAERGDWPLHLGVTEAGPAFQGTIKSATAFGILLSEGIGDTIRVSLSAPPAEEVKVGLQILQSLNLRERKLEIVSCPSCGRAQVDVYSLAEQVTEGLKHVNVPLRVAVMGCVVNGPGEAREAELGVASGNGRGQIFVKGEVIKTVPESEIVQTLIEEANRLAAEMPAGSIGSPEILV.

Residues Cys280, Cys283, Cys315, and Glu322 each contribute to the [4Fe-4S] cluster site.

The protein belongs to the IspG family. It depends on [4Fe-4S] cluster as a cofactor.

The catalysed reaction is (2E)-4-hydroxy-3-methylbut-2-enyl diphosphate + oxidized [flavodoxin] + H2O + 2 H(+) = 2-C-methyl-D-erythritol 2,4-cyclic diphosphate + reduced [flavodoxin]. Its pathway is isoprenoid biosynthesis; isopentenyl diphosphate biosynthesis via DXP pathway; isopentenyl diphosphate from 1-deoxy-D-xylulose 5-phosphate: step 5/6. Its function is as follows. Converts 2C-methyl-D-erythritol 2,4-cyclodiphosphate (ME-2,4cPP) into 1-hydroxy-2-methyl-2-(E)-butenyl 4-diphosphate. This is 4-hydroxy-3-methylbut-2-en-1-yl diphosphate synthase (flavodoxin) from Clavibacter sepedonicus (Clavibacter michiganensis subsp. sepedonicus).